The sequence spans 737 residues: Cilium assembly protein DZIP1L (737 aa).

The interval 1–293 is interaction with Rab8; that stretch reads MGFKGKYPQM…LKQSNEQFIQ (293 aa). Residues 98–132 adopt a coiled-coil conformation; the sequence is VTDLKEAHTTAQEEIATLRKSLSESNNEVVQLHKR. The C2H2-type zinc finger occupies 144–167; sequence YPCHLCTKNFISNEALNVHIGRKH. 5 disordered regions span residues 167 to 187, 214 to 267, 415 to 548, 624 to 682, and 698 to 737; these read HRVA…DRDK, ERNI…KEQL, SEFL…RKDA, KSPL…VSRD, and IRGA…DNLK. Basic and acidic residues-rich tracts occupy residues 244 to 266 and 415 to 438; these read EPKE…RKEQ and SEFL…KGSE. Polar residues predominate over residues 457 to 469; the sequence is SAGSSDSNPTYTK. A compositionally biased stretch (acidic residues) spans 492-510; that stretch reads SQEETENEEERSLTEEEGT. Over residues 665–677 the composition is skewed to polar residues; sequence SSEQQTRSPSPQR. Residues 724–737 are compositionally biased toward basic and acidic residues; sequence EDGKSFNDSDDNLK.

The protein belongs to the DZIP C2H2-type zinc-finger protein family. As to quaternary structure, component of a ciliary transition zone (TZ)-localized complex composed of DZIP1, Fam92 and Cby. Interacts directly with Cby. Interacts with Cep290 (via N-terminus). Interacts (via N-terminus) with Rab8. In neurons of the second and third antennal segments, expressed at the tip of the dendrites.

The protein resides in the cytoplasm. It localises to the cytoskeleton. The protein localises to the microtubule organizing center. Its subcellular location is the centrosome. It is found in the centriole. The protein resides in the cilium basal body. In terms of biological role, component of the DZIP1-Fam92-Cby complex which promotes ciliogenesis in sensory neurons and spermatocytes by acting downstream of Cep290 to initiate early ciliary membrane formation and thus transition zone (TZ) assembly. During spermatogenesis, also regulates distal elongation of the basal-body and their docking (anchoring) to the plasma membrane and as a consequence, regulates the initiation and proper elongation of axonemal microtubules. Within the complex, required to recruit or stabilize Rab8, Fam92 and Cby at the distal basal body of cilia to promote early ciliary membrane formation and initiate TZ assembly. Also acts with Fam92 to restrict Cep290 localization to the proximal part of the TZ. May also be involved in recruitment or stabilization of Mks1 at the TZ. This chain is Cilium assembly protein DZIP1L, found in Drosophila melanogaster (Fruit fly).